The sequence spans 99 residues: Duplicate procyclin (99 aa).

This chain is Duplicate procyclin, found in Trypanosoma brucei brucei.